The following is a 417-amino-acid chain: Pigment epithelium-derived factor (417 aa).

The N-terminal stretch at 1–19 (MQALVLLLWTGALLGHGSS) is a signal peptide. The interval 17 to 41 (GSSQNVPSSSEGSPVPDSTGEPVEE) is disordered. A compositionally biased stretch (polar residues) spans 18 to 28 (SSQNVPSSSEG). Residue glutamine 20 is modified to Pyrrolidone carboxylic acid. Serine 24 carries the post-translational modification Phosphoserine. The N-linked (GlcNAc...) asparagine glycan is linked to asparagine 284.

Belongs to the serpin family. Interacts with PNPLA2; this interaction stimulates the phospholipase A2 activity of PNPLA2. Highly expressed in the liver, gastric glandular mucosa and renal tubules. It is also expressed in the brain, heart, lung retina and testes.

It is found in the secreted. The protein localises to the melanosome. Functionally, neurotrophic protein; induces extensive neuronal differentiation in retinoblastoma cells. Potent inhibitor of angiogenesis. As it does not undergo the S (stressed) to R (relaxed) conformational transition characteristic of active serpins, it exhibits no serine protease inhibitory activity. The chain is Pigment epithelium-derived factor (Serpinf1) from Mus musculus (Mouse).